Here is a 360-residue protein sequence, read N- to C-terminus: Transcriptional coactivator MYCFIDRAFT_190109 (360 aa).

The HTH iclR-type domain occupies 3 to 67; sequence GMALNQLLAC…GFLHEPRPGQ (65 aa). A DNA-binding region (H-T-H motif) is located at residues 33 to 52; that stretch reads ARDVADLTGVPETQLCRVVR.

Its subcellular location is the nucleus. In terms of biological role, transcriptional coactivator; part of the gene cluster that mediates the biosynthesis of an emodin derivative that may be involved in black Sigatoka disease of banana. With MYCFIDRAFT_198930, coregulates the production of the PKS8-1 cluster product. The polypeptide is Transcriptional coactivator MYCFIDRAFT_190109 (Pseudocercospora fijiensis (strain CIRAD86) (Black leaf streak disease fungus)).